The following is a 53-amino-acid chain: UPF0391 membrane protein ECA0470 (53 aa).

2 helical membrane passes run 4–24 (WGII…GGLA) and 30–47 (AAKI…VSLF).

Belongs to the UPF0391 family.

It localises to the cell membrane. The protein is UPF0391 membrane protein ECA0470 of Pectobacterium atrosepticum (strain SCRI 1043 / ATCC BAA-672) (Erwinia carotovora subsp. atroseptica).